The sequence spans 160 residues: uncharacterized protein (160 aa).

Positions 1–18 (MELLSLAILSSFFAVANQ) are cleaved as a signal peptide.

This is an uncharacterized protein from Caenorhabditis elegans.